Consider the following 432-residue polypeptide: Trigger factor (432 aa).

Positions 161-246 (EDRVTIDFTG…LKKVEERELP (86 aa)) constitute a PPIase FKBP-type domain.

The protein belongs to the FKBP-type PPIase family. Tig subfamily.

It is found in the cytoplasm. It catalyses the reaction [protein]-peptidylproline (omega=180) = [protein]-peptidylproline (omega=0). In terms of biological role, involved in protein export. Acts as a chaperone by maintaining the newly synthesized protein in an open conformation. Functions as a peptidyl-prolyl cis-trans isomerase. This is Trigger factor from Klebsiella pneumoniae (strain 342).